Here is a 177-residue protein sequence, read N- to C-terminus: MKFFTDLLPVLLFFGAYWLTRDMFVATGVAIAATAVMVAWAWFKHRKVDTMQWISLGLIVVLGGATLLLHDKHFIMWKPTVLYWVMGAGLLISEFAGKNGLRLMMGKQIEMPDPVWRKLTWAWSGFFAFMGALNLFVAYHFSEDVWVNFKLFGGMGLMLLFVIAQSLFLAKYIEEKK.

5 helical membrane passes run 23–43, 50–70, 73–93, 119–139, and 149–169; these read MFVA…WAWF, TMQW…LLLH, HFIM…LLIS, LTWA…FVAY, and FKLF…SLFL.

This sequence belongs to the YciB family.

The protein resides in the cell inner membrane. Functionally, plays a role in cell envelope biogenesis, maintenance of cell envelope integrity and membrane homeostasis. This is Inner membrane-spanning protein YciB from Chromobacterium violaceum (strain ATCC 12472 / DSM 30191 / JCM 1249 / CCUG 213 / NBRC 12614 / NCIMB 9131 / NCTC 9757 / MK).